Reading from the N-terminus, the 436-residue chain is UPF0597 protein YhaM (436 aa).

This sequence belongs to the UPF0597 family.

This Escherichia coli O139:H28 (strain E24377A / ETEC) protein is UPF0597 protein YhaM.